A 405-amino-acid polypeptide reads, in one-letter code: Aspartokinase (405 aa).

ACT domains follow at residues 267–344 (VSME…AKVS) and 345–405 (IVGV…QLDQ).

The protein belongs to the aspartokinase family.

It carries out the reaction L-aspartate + ATP = 4-phospho-L-aspartate + ADP. It participates in amino-acid biosynthesis; L-lysine biosynthesis via DAP pathway; (S)-tetrahydrodipicolinate from L-aspartate: step 1/4. The protein operates within amino-acid biosynthesis; L-methionine biosynthesis via de novo pathway; L-homoserine from L-aspartate: step 1/3. It functions in the pathway amino-acid biosynthesis; L-threonine biosynthesis; L-threonine from L-aspartate: step 1/5. In Helicobacter pylori (strain J99 / ATCC 700824) (Campylobacter pylori J99), this protein is Aspartokinase (lysC).